The following is a 150-amino-acid chain: Large ribosomal subunit protein bL9 (150 aa).

It belongs to the bacterial ribosomal protein bL9 family.

Its function is as follows. Binds to the 23S rRNA. The polypeptide is Large ribosomal subunit protein bL9 (Moorella thermoacetica (strain ATCC 39073 / JCM 9320)).